Reading from the N-terminus, the 353-residue chain is Histidinol-phosphate aminotransferase 1 (353 aa).

The residue at position 211 (lysine 211) is an N6-(pyridoxal phosphate)lysine.

It belongs to the class-II pyridoxal-phosphate-dependent aminotransferase family. Histidinol-phosphate aminotransferase subfamily. As to quaternary structure, homodimer. The cofactor is pyridoxal 5'-phosphate.

It carries out the reaction L-histidinol phosphate + 2-oxoglutarate = 3-(imidazol-4-yl)-2-oxopropyl phosphate + L-glutamate. It functions in the pathway amino-acid biosynthesis; L-histidine biosynthesis; L-histidine from 5-phospho-alpha-D-ribose 1-diphosphate: step 7/9. The protein is Histidinol-phosphate aminotransferase 1 (hisC1) of Nostoc sp. (strain PCC 7120 / SAG 25.82 / UTEX 2576).